The primary structure comprises 531 residues: Polypyrimidine tract-binding protein 2 (531 aa).

The residue at position 1 (Met-1) is an N-acetylmethionine. Phosphoserine is present on residues Ser-26 and Ser-27. RRM domains lie at 59-133 and 181-257; these read RVLH…YSNH and LRII…FSKL. At Ser-308 the chain carries Phosphoserine. 2 consecutive RRM domains span residues 338–412 and 455–529; these read TVLL…LSKH and ATLH…FSKS.

Monomer. Interacts with NOVA1; the interaction is direct. Identified in a mRNP complex, at least composed of DHX9, DDX3X, ELAVL1, HNRNPU, IGF2BP1, ILF3, PABPC1, PCBP2, PTBP2, STAU1, STAU2, SYNCRIP and YBX1. Part of a ternary complex containing KHSRP and HNRPH1. Interacts with NOVA2; the interaction is direct.

Its subcellular location is the nucleus. RNA-binding protein which binds to intronic polypyrimidine tracts and mediates negative regulation of exons splicing. May antagonize in a tissue-specific manner the ability of NOVA1 to activate exon selection. In addition to its function in pre-mRNA splicing, plays also a role in the regulation of translation. This is Polypyrimidine tract-binding protein 2 from Rattus norvegicus (Rat).